Consider the following 395-residue polypeptide: MNKDNQIKNESGKQAKILVSEIVNNLKNELGINIEIEEGYSIGYPNQEKQFKMDFLVQFTDFDNEQWLIKSTNSIRERIYGTEFFAQNIRLIDEKVKNIYVVVPDSISSAEMKKKRNYSVKINGTTYTSFLTDVLTVNELRQKIVEKASQNIAQGLRANVLGNDAETSIVNLLNDLKNKALWNDYQNAQQTIKSSTYKIYKEILEKIDLKEGFDKILEVTATNDIPLLSNRGKPKTDVSVTIKTNTKELIRNISIKNTREKTVTIHEGSVSDLISRLKLSETDPLSQALIHFEKVGSKKKLIAEHPNSDKILEENLKLYNRELIEFLHSPLLNDKIQMVDLIIFTNKFAVWNRDDYIKHYIEEYSGKGQFGTPFKWTYPSKKRGQKIQIKGFSNN.

Homodimer. The cofactor is Mg(2+).

The catalysed reaction is Endonucleolytic cleavage of DNA to give specific double-stranded fragments with terminal 5'-phosphates.. Functionally, a P subtype restriction enzyme that recognizes the double-stranded sequence 5'-CCGG-3' and cleaves after C-1. In Bacillus subtilis, this protein is Type II restriction enzyme BsuFI (hsdFR).